Consider the following 134-residue polypeptide: Large ribosomal subunit protein uL16c (134 aa).

Residues 1 to 22 (MLSPKRTRFRKQHRGRMKGISH) form a disordered region.

It belongs to the universal ribosomal protein uL16 family. In terms of assembly, part of the 50S ribosomal subunit.

It localises to the plastid. Its subcellular location is the chloroplast. This is Large ribosomal subunit protein uL16c from Nicotiana tabacum (Common tobacco).